The primary structure comprises 367 residues: Cytochrome P450 119 (367 aa).

Heme is bound by residues His76, Arg80, Thr257, Arg259, His315, and Cys317.

The protein belongs to the cytochrome P450 family. Requires heme as cofactor.

It localises to the cytoplasm. This chain is Cytochrome P450 119 (cyp119), found in Sulfurisphaera tokodaii (strain DSM 16993 / JCM 10545 / NBRC 100140 / 7) (Sulfolobus tokodaii).